A 467-amino-acid chain; its full sequence is Phosphomethylpyrimidine synthase (467 aa).

Residues Asn-80, Met-109, Tyr-139, His-175, 195–197 (SRG), 236–239 (DSLR), and Glu-275 contribute to the substrate site. Residue His-279 participates in Zn(2+) binding. Position 302 (Tyr-302) interacts with substrate. Zn(2+) is bound at residue His-343. [4Fe-4S] cluster is bound by residues Cys-423, Cys-426, and Cys-431.

The protein belongs to the ThiC family. The cofactor is [4Fe-4S] cluster.

The enzyme catalyses 5-amino-1-(5-phospho-beta-D-ribosyl)imidazole + S-adenosyl-L-methionine = 4-amino-2-methyl-5-(phosphooxymethyl)pyrimidine + CO + 5'-deoxyadenosine + formate + L-methionine + 3 H(+). It participates in cofactor biosynthesis; thiamine diphosphate biosynthesis. Its function is as follows. Catalyzes the synthesis of the hydroxymethylpyrimidine phosphate (HMP-P) moiety of thiamine from aminoimidazole ribotide (AIR) in a radical S-adenosyl-L-methionine (SAM)-dependent reaction. The polypeptide is Phosphomethylpyrimidine synthase (Synechococcus sp. (strain WH7803)).